Consider the following 203-residue polypeptide: RNA annealing protein YRA2 (203 aa).

N-acetylmethionine is present on Met-1. Disordered regions lie at residues 1–60 and 137–203; these read MDKA…REEP and QPQR…YMKG. Residues 11–20 are compositionally biased toward polar residues; it reads NSHTDSSSNH. The segment covering 47–60 has biased composition (basic and acidic residues); it reads SRSKDRLYREREEP. The RRM domain occupies 64–138; the sequence is KRIRISKIPL…AKIEVEIYQP (75 aa). 2 stretches are compositionally biased toward basic residues: residues 139-153 and 163-180; these read QRKH…RRKQ and PGSH…KNKG.

This sequence belongs to the YRA1 family. Associates with mRNPs. Interacts with YRA1.

It is found in the nucleus. Its function is as follows. Involved in export of poly(A) mRNAs from the nucleus. Recruited to the coding sequences as well as poly-A sites of active genes. The polypeptide is RNA annealing protein YRA2 (YRA2) (Saccharomyces cerevisiae (strain Lalvin EC1118 / Prise de mousse) (Baker's yeast)).